We begin with the raw amino-acid sequence, 520 residues long: Probable alginate O-acetylase AlgI (520 aa).

A run of 10 helical transmembrane segments spans residues 7–24 (VFLF…YLSG), 39–61 (FYAW…NYWI), 78–100 (WLIL…NFGV), 115–137 (FVLT…ISYI), 150–172 (NLID…VLRF), 239–261 (LYFD…GFRF), 311–333 (LFLT…IWGA), 353–375 (VLNP…IFRA), 402–424 (ANLT…FFGL), and 483–505 (WLSQ…ASVL). Residue H322 is part of the active site.

It belongs to the membrane-bound acyltransferase family.

It is found in the cell inner membrane. It participates in glycan biosynthesis; alginate biosynthesis. Functionally, together with AlgJ and AlgF, forms an inner membrane complex which probably interacts with the alginate polymerization-transport complex and adds acetyl groups at the O-2 and O-3 positions of mannuronate residues. Acetylation of alginate is important for the architecture of biofilms and increases resistance to opsonic killing in the host. In Pseudomonas aeruginosa (strain ATCC 15692 / DSM 22644 / CIP 104116 / JCM 14847 / LMG 12228 / 1C / PRS 101 / PAO1), this protein is Probable alginate O-acetylase AlgI (algI).